The chain runs to 221 residues: Nuclear phosphoprotein UL3 homolog (221 aa).

This sequence belongs to the alphaherpesvirinae HHV-1 UL3 family. Post-translationally, phosphorylated.

The protein resides in the host nucleus. The polypeptide is Nuclear phosphoprotein UL3 homolog (Varicella-zoster virus (strain Dumas) (HHV-3)).